The following is a 168-amino-acid chain: Ribonuclease H (168 aa).

The RNase H type-1 domain occupies Asn-10 to Ile-151. Mg(2+) contacts are provided by Asp-19, Glu-57, Asp-79, and Asp-143.

Belongs to the RNase H family. In terms of assembly, monomer. The cofactor is Mg(2+).

The protein resides in the cytoplasm. It carries out the reaction Endonucleolytic cleavage to 5'-phosphomonoester.. Its function is as follows. Endonuclease that specifically degrades the RNA of RNA-DNA hybrids. This is Ribonuclease H from Orientia tsutsugamushi (strain Boryong) (Rickettsia tsutsugamushi).